The chain runs to 446 residues: WD repeat domain phosphoinositide-interacting protein 1 (446 aa).

WD repeat units follow at residues 3–42, 47–88, 92–126, 131–173, 177–216, 222–261, and 304–343; these read AEAADAPPGGVESALSCFSFNQDCTSLATGTKAGYKLFSL, QLDQ…VYHF, TEICNYSYSSNILSIRLNRQRLLVCLEESIYIHNI, LLKT…LYDG, KTVCTIAAHEGTLAAITFNASGSKLASASEKGTVIRVFSV, LYEFRRGMKRYVTISSLVFSMDSQFLCASSNTETVHIFKL, and FATARLNFSGQRNICTLSTIQKLPRLLVASSSGHLYMYNL. The short motif at 131–136 is the Nuclear receptor interaction element; that stretch reads LLKTLL. Residues 225-228 carry the L/FRRG motif motif; sequence FRRG. The interval 386–406 is disordered; sequence ARPSASSASTVPGYSEDGGAL.

The protein belongs to the WD repeat PROPPIN family. As to quaternary structure, interacts with androgen receptor (AR) and the estrogen receptors ESR1 and ESR2. Interacts with WIPI2. Interacts with WDR45. Interacts with ATG16L1. May interact with NUDC. Ubiquitously expressed. Highly expressed in skeletal muscle, heart, testis, pancreas and placenta. Highly expressed in G361, Sk-mel-28, Sk-mel-13, WM852 and WM451 cells. Up-regulated in a variety of tumor tissues.

It is found in the golgi apparatus. Its subcellular location is the trans-Golgi network. It localises to the endosome. The protein resides in the cytoplasmic vesicle. The protein localises to the clathrin-coated vesicle. It is found in the preautophagosomal structure membrane. Its subcellular location is the cytoplasm. It localises to the cytoskeleton. In terms of biological role, component of the autophagy machinery that controls the major intracellular degradation process by which cytoplasmic materials are packaged into autophagosomes and delivered to lysosomes for degradation. Plays an important role in starvation- and calcium-mediated autophagy, as well as in mitophagy. Functions downstream of the ULK1 and PI3-kinases that produce phosphatidylinositol 3-phosphate (PtdIns3P) on membranes of the endoplasmic reticulum once activated. Binds phosphatidylinositol 3-phosphate (PtdIns3P), and maybe other phosphoinositides including PtdIns3,5P2 and PtdIns5P, and is recruited to phagophore assembly sites at the endoplasmic reticulum membranes. There, it assists WIPI2 in the recruitment of ATG12-ATG5-ATG16L1, a complex that directly controls the elongation of the nascent autophagosomal membrane. Together with WDR45/WIPI4, promotes ATG2 (ATG2A or ATG2B)-mediated lipid transfer by enhancing ATG2-association with phosphatidylinositol 3-monophosphate (PI3P)-containing membranes. Involved in xenophagy of Staphylococcus aureus. Invading S.aureus cells become entrapped in autophagosome-like WIPI1 positive vesicles targeted for lysosomal degradation. Also plays a distinct role in controlling the transcription of melanogenic enzymes and melanosome maturation, a process that is distinct from starvation-induced autophagy. May also regulate the trafficking of proteins involved in the mannose-6-phosphate receptor (MPR) recycling pathway. The chain is WD repeat domain phosphoinositide-interacting protein 1 (WIPI1) from Homo sapiens (Human).